The sequence spans 296 residues: Ribosome biogenesis GTPase A (296 aa).

A CP-type G domain is found at 14–178 (RRQVTEKLKL…LLDTPGILWP (165 aa)). Residues 58–61 (NKAD), 130–135 (NVGKST), and G174 each bind GTP.

This sequence belongs to the TRAFAC class YlqF/YawG GTPase family. MTG1 subfamily. In terms of assembly, interacts with ctc. Interacts with the immature 50S ribosome subunit. 2 molecules of rbgA bind to one 50S subunit.

Its subcellular location is the cytoplasm. In terms of biological role, essential protein that is required for a late step of 50S ribosomal subunit assembly. Has GTPase activity that is stimulated by interaction with the immature 50S ribosome subunit. Binds to the 23S rRNA. Required for the association of ribosomal proteins rplP and rpmA with the large subunit. This chain is Ribosome biogenesis GTPase A, found in Bacillus cereus (strain ATCC 14579 / DSM 31 / CCUG 7414 / JCM 2152 / NBRC 15305 / NCIMB 9373 / NCTC 2599 / NRRL B-3711).